The primary structure comprises 435 residues: Serine hydroxymethyltransferase (435 aa).

Residues Leu133 and 137–139 contribute to the (6S)-5,6,7,8-tetrahydrofolate site; that span reads GHL. Lys242 is modified (N6-(pyridoxal phosphate)lysine).

This sequence belongs to the SHMT family. As to quaternary structure, homodimer. It depends on pyridoxal 5'-phosphate as a cofactor.

It localises to the cytoplasm. It carries out the reaction (6R)-5,10-methylene-5,6,7,8-tetrahydrofolate + glycine + H2O = (6S)-5,6,7,8-tetrahydrofolate + L-serine. It functions in the pathway one-carbon metabolism; tetrahydrofolate interconversion. The protein operates within amino-acid biosynthesis; glycine biosynthesis; glycine from L-serine: step 1/1. Its function is as follows. Catalyzes the reversible interconversion of serine and glycine with tetrahydrofolate (THF) serving as the one-carbon carrier. This reaction serves as the major source of one-carbon groups required for the biosynthesis of purines, thymidylate, methionine, and other important biomolecules. Also exhibits THF-independent aldolase activity toward beta-hydroxyamino acids, producing glycine and aldehydes, via a retro-aldol mechanism. In Sphingopyxis alaskensis (strain DSM 13593 / LMG 18877 / RB2256) (Sphingomonas alaskensis), this protein is Serine hydroxymethyltransferase.